A 437-amino-acid polypeptide reads, in one-letter code: MEQLAKLLLWQLLLQQSSVVYLYSVPADASNPDSVVVSVLNISATRGSQAVLPCKSYRMVWTQDRLNDRQRVVHWDVYSTYYGDNKMERLCDMYSAGNQRVYSSYNQGRILMPQNAFTDGNFSLVIKDVAESDAGVYSCNLHHHYCHLYETVKIQLDITKKAKAAKEYWDGEKAVIVALEGSTVMLPCVNRNHIWTERHSEEEQQVVHWDRQPPGVPHDRADRLIDLYASGERRSYGPLFIRQKMNITDTAFALGDFSLRISELENADEGTYSCHLHHHYCGLHERRIYQVFVTEPVREKKVVNLTTHNTAPAIDPNVVRGHNVINVIIPESRIHFFQQLGYVLATLLLFVVLLIIVVFITRKRRQRGYEYNVKKYGEKDVNLKEFTVDTTDLTQYKSEDIRLDYKNNILKEKAEQARSFPAKNIDLDKDFRKEYCK.

Positions 1–22 are cleaved as a signal peptide; sequence MEQLAKLLLWQLLLQQSSVVYL. Topologically, residues 23-339 are extracellular; that stretch reads YSVPADASNP…PESRIHFFQQ (317 aa). Ig-like V-type domains follow at residues 32–159 and 167–294; these read PDSV…LDIT and EYWD…VFVT. 4 N-linked (GlcNAc...) asparagine glycosylation sites follow: Asn-41, Asn-121, Asn-246, and Asn-304. 2 disulfides stabilise this stretch: Cys-54–Cys-139 and Cys-188–Cys-274. The chain crosses the membrane as a helical span at residues 340–360; it reads LGYVLATLLLFVVLLIIVVFI. The Cytoplasmic segment spans residues 361–437; that stretch reads TRKRRQRGYE…DKDFRKEYCK (77 aa).

As to quaternary structure, homodimer in cis. Does not appear to form trans-homodimers.

The protein resides in the cell membrane. In terms of biological role, transmembrane protein which can modulate activity of various signaling pathways, probably via binding to integrin ITGAV:ITGB3. Mediates heterophilic cell-cell interactions in vitro. The chain is Matrix remodeling-associated protein 8 (MXRA8) from Gallus gallus (Chicken).